The following is a 349-amino-acid chain: 5-deoxyribose 1-phosphate isomerase (349 aa).

Residues 49 to 51, arginine 92, and glutamine 199 contribute to the substrate site; that span reads RGA. The active-site Proton donor is the aspartate 240. Position 250–251 (250–251) interacts with substrate; it reads NK.

This sequence belongs to the EIF-2B alpha/beta/delta subunits family. DrdI subfamily.

The enzyme catalyses 5-deoxy-alpha-D-ribose 1-phosphate = 5-deoxy-D-ribulose 1-phosphate. It participates in carbohydrate degradation. In terms of biological role, catalyzes the isomerization of 5-deoxy-alpha-D-ribose 1-phosphate to 5-deoxy-D-ribulose 1-phosphate, as part of a 5-deoxyribose salvage pathway that recycles this toxic radical SAM enzyme by-product to mainstream metabolites. The polypeptide is 5-deoxyribose 1-phosphate isomerase (Clostridium botulinum (strain Loch Maree / Type A3)).